A 78-amino-acid polypeptide reads, in one-letter code: Omega-conotoxin PnVIA (78 aa).

Positions 1–22 (MKLTCMMIIAVLFLTAWTFVMA) are cleaved as a signal peptide. Residues 23–45 (DDPRDEPEARDEMNPAASKLNER) constitute a propeptide that is removed on maturation. 3 disulfides stabilise this stretch: cysteine 47–cysteine 65, cysteine 54–cysteine 69, and cysteine 64–cysteine 73. Glutamine 76 carries the glutamine amide modification.

Expressed by the venom duct.

Its subcellular location is the secreted. Functionally, omega-conotoxins act at presynaptic membranes, they bind and block voltage-gated calcium channels (Cav). Acts on high voltage-activated (HVA) calcium currents in molluscan neurons. This chain is Omega-conotoxin PnVIA, found in Conus pennaceus (Feathered cone).